The chain runs to 509 residues: Cobyric acid synthase (509 aa).

Positions Glu-262–Trp-459 constitute a GATase cobBQ-type domain. The Nucleophile role is filled by Cys-343. Residue His-451 is part of the active site.

It belongs to the CobB/CobQ family. CobQ subfamily.

The protein operates within cofactor biosynthesis; adenosylcobalamin biosynthesis. In terms of biological role, catalyzes amidations at positions B, D, E, and G on adenosylcobyrinic A,C-diamide. NH(2) groups are provided by glutamine, and one molecule of ATP is hydrogenolyzed for each amidation. This is Cobyric acid synthase from Prochlorococcus marinus subsp. pastoris (strain CCMP1986 / NIES-2087 / MED4).